A 417-amino-acid polypeptide reads, in one-letter code: Tyrosine--tRNA ligase (417 aa).

Tyr34 provides a ligand contact to L-tyrosine. The 'HIGH' region motif lies at 39–48; the sequence is PTGDSMHIGH. L-tyrosine is bound by residues Tyr165 and Gln169. The 'KMSKS' region motif lies at 227–231; sequence KFGKS. Lys230 contacts ATP. One can recognise an S4 RNA-binding domain in the interval 349–417; sequence ENIVLWLVDT…KKKYFLARVK (69 aa).

This sequence belongs to the class-I aminoacyl-tRNA synthetase family. TyrS type 1 subfamily. Homodimer.

Its subcellular location is the cytoplasm. It catalyses the reaction tRNA(Tyr) + L-tyrosine + ATP = L-tyrosyl-tRNA(Tyr) + AMP + diphosphate + H(+). In terms of biological role, catalyzes the attachment of tyrosine to tRNA(Tyr) in a two-step reaction: tyrosine is first activated by ATP to form Tyr-AMP and then transferred to the acceptor end of tRNA(Tyr). This is Tyrosine--tRNA ligase from Pediococcus pentosaceus (strain ATCC 25745 / CCUG 21536 / LMG 10740 / 183-1w).